The sequence spans 315 residues: Calumenin (315 aa).

Positions 1–19 (MDLRQFLMCLSLCTAFALS) are cleaved as a signal peptide. Position 44 is a phosphoserine (Ser-44). Position 47 is a phosphotyrosine (Tyr-47). Thr-65 bears the Phosphothreonine mark. EF-hand domains follow at residues 68–103 (ESKE…AQKR), 104–139 (WIYE…YVLD), 151–186 (QMMV…EEYD), 188–223 (MKDI…HDGN), 229–264 (WVKT…SDYD), and 265–300 (HAEA…FVGS). At Ser-69 the chain carries Phosphoserine. Ca(2+) contacts are provided by Asp-81, Asp-83, Asp-85, Glu-92, Asp-117, Asn-119, Asp-121, and Glu-128. Asn-131 carries N-linked (GlcNAc...) asparagine glycosylation. Asp-164 is a Ca(2+) binding site. The residue at position 165 (Lys-165) is an N6-acetyllysine. Ca(2+)-binding residues include Asp-166, Asp-168, Glu-175, Asp-201, Asn-203, Asp-205, Glu-212, Asp-242, Asn-244, Asp-246, Lys-248, and Glu-253. Thr-254 is subject to Phosphothreonine. Phosphoserine occurs at positions 261 and 277. Ca(2+)-binding residues include Asp-278, Asn-280, Asp-282, Lys-284, and Glu-289. The short motif at 312 to 315 (HDEF) is the Prevents secretion from ER element.

The protein belongs to the CREC family. Interacts with GGCX.

Its subcellular location is the endoplasmic reticulum membrane. The protein localises to the golgi apparatus. It is found in the secreted. The protein resides in the melanosome. It localises to the sarcoplasmic reticulum lumen. Involved in regulation of vitamin K-dependent carboxylation of multiple N-terminal glutamate residues. Seems to inhibit gamma-carboxylase GGCX. Binds 7 calcium ions with a low affinity. The sequence is that of Calumenin (CALU) from Pongo abelii (Sumatran orangutan).